The chain runs to 106 residues: Iron-sulfur cluster assembly protein CyaY (106 aa).

It belongs to the frataxin family.

Functionally, involved in iron-sulfur (Fe-S) cluster assembly. May act as a regulator of Fe-S biogenesis. This Escherichia coli O127:H6 (strain E2348/69 / EPEC) protein is Iron-sulfur cluster assembly protein CyaY.